We begin with the raw amino-acid sequence, 36 residues long: Hemoglobin subunit beta (36 aa).

The Globin domain occupies 1-36 (VCVLAHHFGKEFTPQVQAAYQKVVAGVANALAHKYH). N6-acetyllysine is present on Lys-34.

It belongs to the globin family. Heterotetramer of two alpha chains and two beta chains. In terms of tissue distribution, red blood cells.

Involved in oxygen transport from the lung to the various peripheral tissues. This is Hemoglobin subunit beta (HBB) from Pongo pygmaeus (Bornean orangutan).